A 413-amino-acid polypeptide reads, in one-letter code: 4-hydroxy-3-methylbut-2-en-1-yl diphosphate synthase (flavodoxin) (413 aa).

4 residues coordinate [4Fe-4S] cluster: Cys-298, Cys-301, Cys-344, and Glu-351.

Belongs to the IspG family. It depends on [4Fe-4S] cluster as a cofactor.

The enzyme catalyses (2E)-4-hydroxy-3-methylbut-2-enyl diphosphate + oxidized [flavodoxin] + H2O + 2 H(+) = 2-C-methyl-D-erythritol 2,4-cyclic diphosphate + reduced [flavodoxin]. It participates in isoprenoid biosynthesis; isopentenyl diphosphate biosynthesis via DXP pathway; isopentenyl diphosphate from 1-deoxy-D-xylulose 5-phosphate: step 5/6. Functionally, converts 2C-methyl-D-erythritol 2,4-cyclodiphosphate (ME-2,4cPP) into 1-hydroxy-2-methyl-2-(E)-butenyl 4-diphosphate. The protein is 4-hydroxy-3-methylbut-2-en-1-yl diphosphate synthase (flavodoxin) of Koribacter versatilis (strain Ellin345).